The following is a 430-amino-acid chain: Dihydroorotase (430 aa).

The Zn(2+) site is built by His61 and His63. Substrate-binding positions include 63–65 and Asn95; that span reads HLR. Zn(2+) contacts are provided by Asp153, His180, and His233. A substrate-binding site is contributed by Asn279. Residue Asp306 participates in Zn(2+) binding. Asp306 is a catalytic residue. Substrate-binding positions include His310 and 324 to 325; that span reads FG.

It belongs to the metallo-dependent hydrolases superfamily. DHOase family. Class I DHOase subfamily. Zn(2+) serves as cofactor.

The catalysed reaction is (S)-dihydroorotate + H2O = N-carbamoyl-L-aspartate + H(+). Its pathway is pyrimidine metabolism; UMP biosynthesis via de novo pathway; (S)-dihydroorotate from bicarbonate: step 3/3. Functionally, catalyzes the reversible cyclization of carbamoyl aspartate to dihydroorotate. This is Dihydroorotase from Lactiplantibacillus plantarum (strain ATCC BAA-793 / NCIMB 8826 / WCFS1) (Lactobacillus plantarum).